The following is a 363-amino-acid chain: Chalcone synthase B (363 aa).

C170 is an active-site residue.

It belongs to the thiolase-like superfamily. Chalcone/stilbene synthases family.

It catalyses the reaction (E)-4-coumaroyl-CoA + 3 malonyl-CoA + 3 H(+) = 2',4,4',6'-tetrahydroxychalcone + 3 CO2 + 4 CoA. It functions in the pathway secondary metabolite biosynthesis; flavonoid biosynthesis. The primary product of this enzyme is 4,2',4',6'-tetrahydroxychalcone (also termed naringenin-chalcone or chalcone) which can under specific conditions spontaneously isomerize into naringenin. This is Chalcone synthase B (CHSB) from Ipomoea nil (Japanese morning glory).